The sequence spans 105 residues: MKMIRAILRPDKVEEVVDALSNAGHVALTKMDVIGRGKQKGIRLDNIYYDELPKVMLLLVTPSEEIDDIIEIINETAFTGNFGDGKIFISPVEEAYTVRTRSKGL.

Belongs to the P(II) protein family.

Could be involved in the regulation of nitrogen fixation. This Methanobacterium ivanovii protein is Nitrogen fixation nifHD region GlnB-like protein 1 (glnBA).